Consider the following 655-residue polypeptide: Very long-chain specific acyl-CoA dehydrogenase, mitochondrial (655 aa).

Residues 1–40 constitute a mitochondrion transit peptide; sequence MQAARMAASLGRQLLRLGGGSSRLTALLGQPRPGPARRPY. A disordered region spans residues 23 to 42; that stretch reads RLTALLGQPRPGPARRPYAG. The interval 41–482 is catalytic; it reads AGGAAQLALD…ALQGCMDKGK (442 aa). K51 carries the N6-acetyllysine modification. The residue at position 71 (K71) is an N6-acetyllysine; alternate. K71 is modified (N6-succinyllysine; alternate). At K195 the chain carries N6-succinyllysine. 214-223 contacts FAD; it reads FCLTEPSSGS. Position 237 is an S-nitrosocysteine (C237). Position 239 is an N6-acetyllysine; alternate (K239). K239 bears the N6-succinyllysine; alternate mark. Position 249 to 251 (249 to 251) interacts with FAD; that stretch reads WIS. 2 positions are modified to N6-acetyllysine; alternate: K276 and K278. An N6-succinyllysine; alternate mark is found at K276 and K278. Residue K298 is modified to N6-acetyllysine. The residue at position 331 (K331) is an N6-acetyllysine; alternate. K331 carries the post-translational modification N6-succinyllysine; alternate. Residue K372 is modified to N6-succinyllysine. 461–463 contributes to the substrate binding site; it reads FEG. Catalysis depends on E462, which acts as the Proton acceptor. 464 to 466 is a binding site for FAD; that stretch reads TND. Residue K482 is modified to N6-acetyllysine; alternate. N6-succinyllysine; alternate is present on K482. Residues 483 to 516 form a membrane-anchoring region; that stretch reads ELSGLGSALKNPFGNAGLLLGEAGKQLRRRAGLG. A phosphoserine mark is found at S517 and S522. Position 550 is an N6-acetyllysine (K550). K556 is modified (N6-acetyllysine; alternate). At K556 the chain carries N6-succinyllysine; alternate. Q562 is an FAD binding site. K639 bears the N6-succinyllysine mark.

Belongs to the acyl-CoA dehydrogenase family. In terms of assembly, homodimer. Homodimerizes after import into the mitochondrion. It depends on FAD as a cofactor. In terms of processing, S-nitrosylation at Cys-237 in liver improves catalytic efficiency. As to expression, predominantly expressed in heart and skeletal muscle (at protein level). Also detected in kidney and liver (at protein level).

It localises to the mitochondrion inner membrane. The catalysed reaction is a very-long-chain 2,3-saturated fatty acyl-CoA + oxidized [electron-transfer flavoprotein] + H(+) = a very-long-chain (2E)-enoyl-CoA + reduced [electron-transfer flavoprotein]. It catalyses the reaction decanoyl-CoA + oxidized [electron-transfer flavoprotein] + H(+) = (2E)-decenoyl-CoA + reduced [electron-transfer flavoprotein]. It carries out the reaction dodecanoyl-CoA + oxidized [electron-transfer flavoprotein] + H(+) = (2E)-dodecenoyl-CoA + reduced [electron-transfer flavoprotein]. The enzyme catalyses tetradecanoyl-CoA + oxidized [electron-transfer flavoprotein] + H(+) = (2E)-tetradecenoyl-CoA + reduced [electron-transfer flavoprotein]. The catalysed reaction is oxidized [electron-transfer flavoprotein] + hexadecanoyl-CoA + H(+) = (2E)-hexadecenoyl-CoA + reduced [electron-transfer flavoprotein]. It catalyses the reaction octadecanoyl-CoA + oxidized [electron-transfer flavoprotein] + H(+) = (2E)-octadecenoyl-CoA + reduced [electron-transfer flavoprotein]. It carries out the reaction eicosanoyl-CoA + oxidized [electron-transfer flavoprotein] + H(+) = (2E)-eicosenoyl-CoA + reduced [electron-transfer flavoprotein]. The enzyme catalyses docosanoyl-CoA + oxidized [electron-transfer flavoprotein] + H(+) = (2E)-docosenoyl-CoA + reduced [electron-transfer flavoprotein]. The catalysed reaction is tetracosanoyl-CoA + oxidized [electron-transfer flavoprotein] + H(+) = (2E)-tetracosenoyl-CoA + reduced [electron-transfer flavoprotein]. It catalyses the reaction (9Z)-hexadecenoyl-CoA + oxidized [electron-transfer flavoprotein] + H(+) = (2E,9Z)-hexadecadienoyl-CoA + reduced [electron-transfer flavoprotein]. It carries out the reaction oxidized [electron-transfer flavoprotein] + (9Z)-octadecenoyl-CoA + H(+) = (2E,9Z)-octadecadienoyl-CoA + reduced [electron-transfer flavoprotein]. It functions in the pathway lipid metabolism; mitochondrial fatty acid beta-oxidation. Its function is as follows. Very long-chain specific acyl-CoA dehydrogenase is one of the acyl-CoA dehydrogenases that catalyze the first step of mitochondrial fatty acid beta-oxidation, an aerobic process breaking down fatty acids into acetyl-CoA and allowing the production of energy from fats. The first step of fatty acid beta-oxidation consists in the removal of one hydrogen from C-2 and C-3 of the straight-chain fatty acyl-CoA thioester, resulting in the formation of trans-2-enoyl-CoA. Among the different mitochondrial acyl-CoA dehydrogenases, very long-chain specific acyl-CoA dehydrogenase acts specifically on acyl-CoAs with saturated 12 to 24 carbons long primary chains. This chain is Very long-chain specific acyl-CoA dehydrogenase, mitochondrial, found in Homo sapiens (Human).